We begin with the raw amino-acid sequence, 298 residues long: Porphobilinogen deaminase (298 aa).

Position 242 is an S-(dipyrrolylmethanemethyl)cysteine (Cys-242).

Belongs to the HMBS family. Monomer. The cofactor is dipyrromethane.

It catalyses the reaction 4 porphobilinogen + H2O = hydroxymethylbilane + 4 NH4(+). The protein operates within porphyrin-containing compound metabolism; protoporphyrin-IX biosynthesis; coproporphyrinogen-III from 5-aminolevulinate: step 2/4. Tetrapolymerization of the monopyrrole PBG into the hydroxymethylbilane pre-uroporphyrinogen in several discrete steps. This Fusobacterium nucleatum subsp. nucleatum (strain ATCC 25586 / DSM 15643 / BCRC 10681 / CIP 101130 / JCM 8532 / KCTC 2640 / LMG 13131 / VPI 4355) protein is Porphobilinogen deaminase.